Reading from the N-terminus, the 89-residue chain is Small ribosomal subunit protein uS15 (89 aa).

This sequence belongs to the universal ribosomal protein uS15 family. As to quaternary structure, part of the 30S ribosomal subunit. Forms a bridge to the 50S subunit in the 70S ribosome, contacting the 23S rRNA.

One of the primary rRNA binding proteins, it binds directly to 16S rRNA where it helps nucleate assembly of the platform of the 30S subunit by binding and bridging several RNA helices of the 16S rRNA. Functionally, forms an intersubunit bridge (bridge B4) with the 23S rRNA of the 50S subunit in the ribosome. The chain is Small ribosomal subunit protein uS15 from Geobacillus kaustophilus (strain HTA426).